We begin with the raw amino-acid sequence, 1160 residues long: Major DNA-binding protein (1160 aa).

A Required for filament formation motif is present at residues 808-809; that stretch reads FW. Residues 1139–1160 are required for nuclear localization; it reads ARGGEHAFDEDCGLLPAKRGRL.

Belongs to the herpesviridae major DNA-binding protein family. Homooligomers. Forms double-helical filaments necessary for the formation of replication compartments within the host nucleus. Interacts with the origin-binding protein. Interacts with the helicase primase complex; this interaction stimulates primer synthesis activity of the helicase-primase complex. Interacts with the DNA polymerase. Interacts with the alkaline exonuclease; this interaction increases its nuclease processivity.

The protein localises to the host nucleus. Functionally, single-stranded DNA-binding protein required for DNA replication. In terms of biological role, plays several crucial roles in viral infection. Participates in the opening of the viral DNA origin to initiate replication by interacting with the origin-binding protein. May disrupt loops, hairpins and other secondary structures present on ssDNA to reduce and eliminate pausing of viral DNA polymerase at specific sites during elongation. Promotes viral DNA recombination by performing strand-transfer, characterized by the ability to transfer a DNA strand from a linear duplex to a complementary single-stranded DNA circle. Can also catalyze the renaturation of complementary single strands. Additionally, reorganizes the host cell nucleus, leading to the formation of prereplicative sites and replication compartments. This process is driven by the protein which can form double-helical filaments in the absence of DNA. This is Major DNA-binding protein from Simian cytomegalovirus (strain Colburn).